Reading from the N-terminus, the 78-residue chain is Beta-defensin 135 (78 aa).

Positions Met1–Ser24 are cleaved as a signal peptide. 2 disulfides stabilise this stretch: Cys37–Cys64 and Cys48–Cys66.

The protein belongs to the beta-defensin family.

Its subcellular location is the secreted. Functionally, has antibacterial activity. The protein is Beta-defensin 135 (DEFB135) of Pan troglodytes (Chimpanzee).